A 419-amino-acid polypeptide reads, in one-letter code: eIF5-mimic protein 2-A (419 aa).

Positions 1 to 15 are enriched in polar residues; sequence MNNQKQQKPTLTGQR. Positions 1 to 29 are disordered; it reads MNNQKQQKPTLTGQRFKTRKRDEKERFDP. The region spanning 247–414 is the W2 domain; the sequence is NQQSIGARKE…KNAEEESESE (168 aa).

This sequence belongs to the BZW family.

In terms of biological role, translation initiation regulator which may repress repeat-associated non-AUG (RAN) initiated translation probably by acting as a competitive inhibitor of eukaryotic translation initiation factor 5 (EIF5) function. Enhances histone H4 gene transcription but does not seem to bind DNA directly. The protein is eIF5-mimic protein 2-A (bzw1a) of Danio rerio (Zebrafish).